Reading from the N-terminus, the 148-residue chain is SsrA-binding protein (148 aa).

The disordered stretch occupies residues 128–148; that stretch reads ESIAKKDQERNLKREFKNNNR.

It belongs to the SmpB family.

It localises to the cytoplasm. In terms of biological role, required for rescue of stalled ribosomes mediated by trans-translation. Binds to transfer-messenger RNA (tmRNA), required for stable association of tmRNA with ribosomes. tmRNA and SmpB together mimic tRNA shape, replacing the anticodon stem-loop with SmpB. tmRNA is encoded by the ssrA gene; the 2 termini fold to resemble tRNA(Ala) and it encodes a 'tag peptide', a short internal open reading frame. During trans-translation Ala-aminoacylated tmRNA acts like a tRNA, entering the A-site of stalled ribosomes, displacing the stalled mRNA. The ribosome then switches to translate the ORF on the tmRNA; the nascent peptide is terminated with the 'tag peptide' encoded by the tmRNA and targeted for degradation. The ribosome is freed to recommence translation, which seems to be the essential function of trans-translation. This Fusobacterium nucleatum subsp. nucleatum (strain ATCC 25586 / DSM 15643 / BCRC 10681 / CIP 101130 / JCM 8532 / KCTC 2640 / LMG 13131 / VPI 4355) protein is SsrA-binding protein.